The following is a 560-amino-acid chain: NAD-dependent malic enzyme (560 aa).

Catalysis depends on tyrosine 100, which acts as the Proton donor. Arginine 153 contacts NAD(+). The active-site Proton acceptor is the lysine 171. Residues glutamate 242, aspartate 243, and aspartate 266 each coordinate a divalent metal cation. NAD(+) is bound by residues aspartate 266 and asparagine 413.

It belongs to the malic enzymes family. Homotetramer. Mg(2+) is required as a cofactor. The cofactor is Mn(2+).

The enzyme catalyses (S)-malate + NAD(+) = pyruvate + CO2 + NADH. It catalyses the reaction oxaloacetate + H(+) = pyruvate + CO2. This is NAD-dependent malic enzyme from Psychromonas ingrahamii (strain DSM 17664 / CCUG 51855 / 37).